Reading from the N-terminus, the 224-residue chain is UPF0111 protein TC_0063 (224 aa).

It belongs to the UPF0111 family.

The chain is UPF0111 protein TC_0063 from Chlamydia muridarum (strain MoPn / Nigg).